A 374-amino-acid polypeptide reads, in one-letter code: Diels-Alderase fsa2 (374 aa).

A beta-sandwich motif region spans residues 1–216 (MSNVTVSAFT…MDRVWSPLSW (216 aa)). Positions 216-374 (WPQVMTESYY…VGTGGQCELS (159 aa)) are beta-barrel motif.

The protein belongs to the Diels-Alderase family.

It catalyses the reaction (5S)-3-[(2E,6R,8E,10E,12E)-2,6-dimethyltetradeca-2,8,10,12-tetraenoyl]-5-(hydroxymethyl)pyrrolidine-2,4-dione = trichosetin. It participates in mycotoxin biosynthesis. In terms of biological role, diels-Alderase; part of the gene cluster that mediates the biosynthesis of the HIV-1 integrase inhibitor equisetin and of fusarisetin A, both trans-fused decalin-containing tetramic acids showing also antimicrobial activity. The PKS module of fsa1 together with the enoylreductase fsa3 catalyze the formation of the polyketide unit which is then conjugated to L-serine by the condensation domain of the fsa1 NRPS module. Activity of the Dieckmann cyclase domain (RED) results in release of the Dieckmann product intermediate. Diels-Alderase fsa2 is involved in endo-selective Diels-Alder cycloaddition to form the decalin ring, leading to the production of N-desmethylequisetin also called trichosetin. Subsequent N-methylation is carried out by fsa4 to give equisetin. The enzymatic gene responsible for the conversion of equisetin to fusarisetin A has not been identified yet and is probably located outside of the fsa cluster. This is Diels-Alderase fsa2 from Fusarium sp. (strain FN080326).